The primary structure comprises 465 residues: Probable oxidoreductase AIM17 (465 aa).

The transit peptide at 1–16 (MLRSNLCRGSRILARL) directs the protein to the mitochondrion. Fe cation-binding residues include His246, Asp248, and His428.

Belongs to the gamma-BBH/TMLD family. It depends on Fe(2+) as a cofactor. L-ascorbate serves as cofactor.

The protein resides in the mitochondrion. This Saccharomyces cerevisiae (strain ATCC 204508 / S288c) (Baker's yeast) protein is Probable oxidoreductase AIM17 (AIM17).